A 448-amino-acid polypeptide reads, in one-letter code: Biotin carboxylase (448 aa).

The 445-residue stretch at 1 to 445 (MLEKVVIANR…NIHYLEKKLG (445 aa)) folds into the Biotin carboxylation domain. ATP is bound by residues K116, K159, 165–166 (GG), 201–204 (EKYL), H209, and H236. Positions 120 to 317 (IKAMKKAGVP…LVKEQLRIAA (198 aa)) constitute an ATP-grasp domain. A hydrogencarbonate-binding site is contributed by K238. ATP is bound by residues E276 and E288. Mg(2+) is bound by residues E276, E288, and N290. E276, E288, and N290 together coordinate Mn(2+). Residues R292, V295, and R338 each coordinate hydrogencarbonate. R292 is an active-site residue. R338 contacts biotin.

In terms of assembly, acetyl-CoA carboxylase is a heterohexamer of biotin carboxyl carrier protein, biotin carboxylase and the two subunits of carboxyl transferase in a 2:2 complex. Mg(2+) serves as cofactor. Requires Mn(2+) as cofactor.

It catalyses the reaction N(6)-biotinyl-L-lysyl-[protein] + hydrogencarbonate + ATP = N(6)-carboxybiotinyl-L-lysyl-[protein] + ADP + phosphate + H(+). It participates in lipid metabolism; malonyl-CoA biosynthesis; malonyl-CoA from acetyl-CoA: step 1/1. Functionally, this protein is a component of the acetyl coenzyme A carboxylase complex; first, biotin carboxylase catalyzes the carboxylation of the carrier protein and then the transcarboxylase transfers the carboxyl group to form malonyl-CoA. This is Biotin carboxylase (accC) from Haemophilus influenzae (strain ATCC 51907 / DSM 11121 / KW20 / Rd).